Here is a 96-residue protein sequence, read N- to C-terminus: Small ribosomal subunit protein bS21 (96 aa).

Basic and acidic residues predominate over residues 37 to 52 (EKPSEKKAREKAEAVR). The interval 37–96 (EKPSEKKAREKAEAVRRARKLARKKLQREGLLPSKPKPVFGADRGRGAAGGAGGAPRPAR) is disordered. Positions 53–62 (RARKLARKKL) are enriched in basic residues.

This sequence belongs to the bacterial ribosomal protein bS21 family.

This chain is Small ribosomal subunit protein bS21, found in Afipia carboxidovorans (strain ATCC 49405 / DSM 1227 / KCTC 32145 / OM5) (Oligotropha carboxidovorans).